The chain runs to 1132 residues: Phospholipid-transporting ATPase IG (1132 aa).

Residues 1-66 (MQMVPSLPPA…NFLPKNLFEQ (66 aa)) are Cytoplasmic-facing. A helical membrane pass occupies residues 67–85 (FRRIANFYFLIIFLVQVTV). A topological domain (extracellular) is located at residue D86. Residues 87-107 (TPTSPVTSGLPLFFVITVTAI) traverse the membrane as a helical segment. At 108-290 (KQGYEDCLRH…SQKRSAVEKS (183 aa)) the chain is on the cytoplasmic side. The chain crosses the membrane as a helical span at residues 291 to 311 (INAFLIVYLFILLTKAAVCTT). Residues 312 to 346 (LKYVWQSTPYNDEPWYNQKTQKERETLKVLKMFTD) are Extracellular-facing. A helical membrane pass occupies residues 347-367 (FLSFMVLFNFIIPVSMYVTVE). Residues 368 to 879 (MQKFLGSFFI…YVRIAHLVQY (512 aa)) lie on the Cytoplasmic side of the membrane. The 4-aspartylphosphate intermediate role is filled by D412. Residues D412, K413, and T414 each coordinate ATP. Mg(2+) is bound at residue D412. A Mg(2+)-binding site is contributed by T414. S445 is modified (phosphoserine). 9 residues coordinate ATP: E501, F543, K566, R597, T677, G678, D679, R792, and K798. D819 is a binding site for Mg(2+). The ATP site is built by N822 and D823. D823 provides a ligand contact to Mg(2+). A helical transmembrane segment spans residues 880-900 (FFYKNLCFILPQFLYQFFCGF). At 901–908 (SQQPLYDA) the chain is on the extracellular side. The chain crosses the membrane as a helical span at residues 909-929 (AYLTMYNICFTSLPILAYSLL). The Cytoplasmic portion of the chain corresponds to 930–955 (EQHINIDTLTSDPRLYMKISGNAMLQ). A helical membrane pass occupies residues 956-976 (LGPFLYWTFLAAFEGTVFFFG). Over 977 to 995 (TYFLFQTASLEENGKVYGN) the chain is Extracellular. Residues 996 to 1016 (WTFGTIVFTVLVFTVTLKLAL) form a helical membrane-spanning segment. Over 1017-1026 (DTRFWTWINH) the chain is Cytoplasmic. The helical transmembrane segment at 1027–1047 (FVIWGSLAFYVFFSFFWGGII) threads the bilayer. Over 1048–1069 (WPFLKQQRMYFVFAQMLSSVST) the chain is Extracellular. Residues 1070 to 1090 (WLAIILLIFISLFPEILLIVL) traverse the membrane as a helical segment. Topologically, residues 1091–1132 (KNVRRRSARRNLSCRRASDSLSARPSVRPLLLRTFSDESNVL) are cytoplasmic. 3 positions are modified to phosphoserine: S1108, S1116, and S1126. A Di-leucine motif motif is present at residues 1116–1121 (SVRPLL).

The protein belongs to the cation transport ATPase (P-type) (TC 3.A.3) family. Type IV subfamily. Component of a P4-ATPase flippase complex which consists of a catalytic alpha subunit ATP11C and an accessory beta subunit TMEM30A. Mg(2+) serves as cofactor. In terms of processing, proteolytically cleaved by CASP3, CASP6 and CASP7. Phosphorylated at Ser-1116 likely by PRKCA; this creates a functional di-leucine motif that is sufficient for endocytosis. In terms of tissue distribution, widely expressed.

The protein localises to the cell membrane. It localises to the endoplasmic reticulum membrane. Its subcellular location is the early endosome membrane. The protein resides in the recycling endosome membrane. The catalysed reaction is ATP + H2O + phospholipidSide 1 = ADP + phosphate + phospholipidSide 2.. It carries out the reaction a 1,2-diacyl-sn-glycero-3-phospho-L-serine(out) + ATP + H2O = a 1,2-diacyl-sn-glycero-3-phospho-L-serine(in) + ADP + phosphate + H(+). The enzyme catalyses a 1,2-diacyl-sn-glycero-3-phosphoethanolamine(out) + ATP + H2O = a 1,2-diacyl-sn-glycero-3-phosphoethanolamine(in) + ADP + phosphate + H(+). With respect to regulation, the flippase activity is inactivated by caspase-mediated cleavage in apoptotic cells, allowing for PS exposure on the cell surface and engulfment of apoptotic cells by macrophages. The ATPase activity is up-regulated by aminophospholipids PS and PE and down-regulated by Increasing intracellular Ca2+ levels. Catalytic component of a P4-ATPase flippase complex which catalyzes the hydrolysis of ATP coupled to the transport of aminophospholipids, phosphatidylserines (PS) and phosphatidylethanolamines (PE), from the outer to the inner leaflet of the plasma membrane. Major PS-flippase in immune cell subsets. In erythrocyte plasma membrane, it is required to maintain PS in the inner leaflet preventing its exposure on the surface. This asymmetric distribution is critical for the survival of erythrocytes in circulation since externalized PS is a phagocytic signal for erythrocyte clearance by splenic macrophages. Required for B cell differentiation past the pro-B cell stage. Seems to mediate PS flipping in pro-B cells. May be involved in the transport of cholestatic bile acids. This Homo sapiens (Human) protein is Phospholipid-transporting ATPase IG.